The primary structure comprises 622 residues: Basic helix-loop-helix ARNT-like protein 2 (622 aa).

The segment covering 1–10 (MAEAGVGSAE) has biased composition (low complexity). 2 disordered regions span residues 1-29 (MAEA…DGNS) and 41-86 (PITK…EDEE). Residues 45–54 (PATTSFNNSV) are compositionally biased toward polar residues. Over residues 67-76 (DNQDTVEVDG) the composition is skewed to acidic residues. A compositionally biased stretch (basic and acidic residues) spans 77–86 (DPQKRNEDEE). In terms of domain architecture, bHLH spans 92 to 145 (DFREAHSQTEKRRRDKMNNLIEELSAMIPQCNPMARKLDKLTVLRMAVQHLKSL). 2 consecutive PAS domains span residues 163–235 (KDDE…DVSP) and 342–412 (VPQK…LQNK). The 44-residue stretch at 417 to 460 (TNSYKFRAKDGSFITLKSQWFSFMNPWTKELEYIVSNNTVVLGH) folds into the PAC domain.

Component of the circadian core oscillator, which includes the CRY proteins, CLOCK, or NPAS2, BMAL1 or BMAL2, CSNK1D and/or CSNK1E, TIMELESS and the PER proteins. Interacts directly with CLOCK to form the BMAL2-CLOCK transactivator. Can form heterodimers or homodimers which interact directly with CLOCK to form the transcription activator. Expressed in the pineal gland.

Its subcellular location is the nucleus. In terms of biological role, transcriptional activator which forms a core component of the circadian clock. The circadian clock, an internal time-keeping system, regulates various physiological processes through the generation of approximately 24 hour circadian rhythms in gene expression, which are translated into rhythms in metabolism and behavior. It is derived from the Latin roots 'circa' (about) and 'diem' (day) and acts as an important regulator of a wide array of physiological functions including metabolism, sleep, body temperature, blood pressure, endocrine, immune, cardiovascular, and renal function. Consists of two major components: the central clock, residing in the suprachiasmatic nucleus (SCN) of the brain, and the peripheral clocks that are present in nearly every tissue and organ system. Both the central and peripheral clocks can be reset by environmental cues, also known as Zeitgebers (German for 'timegivers'). The predominant Zeitgeber for the central clock is light, which is sensed by retina and signals directly to the SCN. The central clock entrains the peripheral clocks through neuronal and hormonal signals, body temperature and feeding-related cues, aligning all clocks with the external light/dark cycle. Circadian rhythms allow an organism to achieve temporal homeostasis with its environment at the molecular level by regulating gene expression to create a peak of protein expression once every 24 hours to control when a particular physiological process is most active with respect to the solar day. Transcription and translation of core clock components (CLOCK, NPAS2, BMAL1, BMAL2, PER1, PER2, PER3, CRY1 and CRY2) plays a critical role in rhythm generation, whereas delays imposed by post-translational modifications (PTMs) are important for determining the period (tau) of the rhythms (tau refers to the period of a rhythm and is the length, in time, of one complete cycle). A diurnal rhythm is synchronized with the day/night cycle, while the ultradian and infradian rhythms have a period shorter and longer than 24 hours, respectively. Disruptions in the circadian rhythms contribute to the pathology of cardiovascular diseases, cancer, metabolic syndromes and aging. A transcription/translation feedback loop (TTFL) forms the core of the molecular circadian clock mechanism. Transcription factors, CLOCK or NPAS2 and BMAL1 or BMAL2, form the positive limb of the feedback loop, act in the form of a heterodimer and activate the transcription of core clock genes and clock-controlled genes (involved in key metabolic processes), harboring E-box elements (5'-CACGTG-3') within their promoters. The core clock genes: PER1/2/3 and CRY1/2 which are transcriptional repressors form the negative limb of the feedback loop and interact with the CLOCK|NPAS2-BMAL1|BMAL2 heterodimer inhibiting its activity and thereby negatively regulating their own expression. This heterodimer also activates nuclear receptors NR1D1/2 and RORA/B/G, which form a second feedback loop and which activate and repress BMAL1 transcription, respectively. The preferred binding motif for the CLOCK-BMAL1 heterodimer is 5'-CACGTGA-3', which contains a flanking adenine nucleotide at the 3-prime end of the canonical 6-nucleotide E-box sequence. CLOCK specifically binds to the half-site 5'-CAC-3', while BMAL1 binds to the half-site 5'-GTGA-3'. The chain is Basic helix-loop-helix ARNT-like protein 2 (BMAL2) from Gallus gallus (Chicken).